Consider the following 147-residue polypeptide: NADH-quinone oxidoreductase subunit A (147 aa).

Transmembrane regions (helical) follow at residues Leu13–Val33, Tyr70–Ala90, and Val104–Leu124.

The protein belongs to the complex I subunit 3 family. NDH-1 is composed of 14 different subunits. Subunits NuoA, H, J, K, L, M, N constitute the membrane sector of the complex.

The protein resides in the cell inner membrane. It carries out the reaction a quinone + NADH + 5 H(+)(in) = a quinol + NAD(+) + 4 H(+)(out). In terms of biological role, NDH-1 shuttles electrons from NADH, via FMN and iron-sulfur (Fe-S) centers, to quinones in the respiratory chain. The immediate electron acceptor for the enzyme in this species is believed to be ubiquinone. Couples the redox reaction to proton translocation (for every two electrons transferred, four hydrogen ions are translocated across the cytoplasmic membrane), and thus conserves the redox energy in a proton gradient. This is NADH-quinone oxidoreductase subunit A from Gluconacetobacter diazotrophicus (strain ATCC 49037 / DSM 5601 / CCUG 37298 / CIP 103539 / LMG 7603 / PAl5).